Consider the following 144-residue polypeptide: uncharacterized protein (144 aa).

The segment covering 125 to 135 (PQQQNNHQLQS) has biased composition (polar residues). The tract at residues 125 to 144 (PQQQNNHQLQSKPKAASISR) is disordered.

This is an uncharacterized protein from Rickettsia prowazekii (strain Madrid E).